The primary structure comprises 276 residues: Homeobox protein TOS8 (276 aa).

The segment covering 176-185 (NSVRGSNNGY) has biased composition (polar residues). The disordered stretch occupies residues 176 to 199 (NSVRGSNNGYSAKEKKHKAHGKRS). Basic residues predominate over residues 189–199 (EKKHKAHGKRS). A DNA-binding region (homeobox; TALE-type) is located at residues 194–256 (AHGKRSNLPK…NARRRKIFSG (63 aa)).

This sequence belongs to the TALE/CUP9 homeobox family.

Its subcellular location is the nucleus. The polypeptide is Homeobox protein TOS8 (TOS8) (Saccharomyces cerevisiae (strain ATCC 204508 / S288c) (Baker's yeast)).